Here is a 410-residue protein sequence, read N- to C-terminus: Angiopoietin-related protein 4 (410 aa).

The signal sequence occupies residues 1-23 (MRCAPTAGAALMLCAATAGLLSA). A disordered region spans residues 81 to 106 (KDPEGSAAPPRAQANLVNPGGGDASP). A coiled-coil region spans residues 107–155 (ETLRSLKTQLEAQNSRIQQLFQKVAQQQRHLEKQQLRIQNLQSQMDHLA). An N-linked (GlcNAc...) asparagine glycan is attached at Asn184. The Fibrinogen C-terminal domain maps to 186–408 (SRLHRLPRDC…ATTILVQPTA (223 aa)). Intrachain disulfides connect Cys195–Cys223 and Cys348–Cys361.

As to quaternary structure, homooligomer; disulfide-linked via Cys residues in the N-terminal part of the protein. The homooligomer undergoes proteolytic processing to release the ANGPTL4 C-terminal chain, which circulates as a monomer. The homooligomer unprocessed form is able to interact with the extracellular matrix. N-glycosylated. In terms of processing, forms disulfide-linked dimers and tetramers. Post-translationally, cleaved into a smaller N-terminal chain and a larger chain that contains the fibrinogen C-terminal domain; both cleaved and uncleaved forms are detected in the extracellular space. The cleaved form is not present within the cell.

It is found in the secreted. It localises to the extracellular space. Its subcellular location is the extracellular matrix. Functionally, mediates inactivation of the lipoprotein lipase LPL, and thereby plays a role in the regulation of triglyceride clearance from the blood serum and in lipid metabolism. May also play a role in regulating glucose homeostasis and insulin sensitivity. Inhibits proliferation, migration, and tubule formation of endothelial cells and reduces vascular leakage. Upon heterologous expression, inhibits the adhesion of endothelial cell to the extracellular matrix (ECM), and inhibits the reorganization of the actin cytoskeleton, formation of actin stress fibers and focal adhesions in endothelial cells that have adhered to ANGPTL4-containing ECM (in vitro). Depending on context, may modulate tumor-related angiogenesis. Its function is as follows. Mediates inactivation of the lipoprotein lipase LPL, and thereby plays an important role in the regulation of triglyceride clearance from the blood serum and in lipid metabolism. Has higher activity in LPL inactivation than the uncleaved protein. The polypeptide is Angiopoietin-related protein 4 (ANGPTL4) (Bos taurus (Bovine)).